The primary structure comprises 181 residues: ATP-dependent protease subunit HslV (181 aa).

Thr-2 is a catalytic residue. Residues Gly-157, Cys-160, and Thr-163 each coordinate Na(+).

The protein belongs to the peptidase T1B family. HslV subfamily. A double ring-shaped homohexamer of HslV is capped on each side by a ring-shaped HslU homohexamer. The assembly of the HslU/HslV complex is dependent on binding of ATP.

Its subcellular location is the cytoplasm. The enzyme catalyses ATP-dependent cleavage of peptide bonds with broad specificity.. Allosterically activated by HslU binding. Its function is as follows. Protease subunit of a proteasome-like degradation complex believed to be a general protein degrading machinery. The protein is ATP-dependent protease subunit HslV of Hahella chejuensis (strain KCTC 2396).